The sequence spans 362 residues: Atypical chemokine receptor 3 (362 aa).

Residues 1–40 are Extracellular-facing; sequence MDLHLFDYSEPGNFSDISWPCNSSDCIVVDTVMCPNMPNK. N-linked (GlcNAc...) asparagine glycosylation is found at asparagine 13, asparagine 22, and asparagine 39. Residues 41–61 traverse the membrane as a helical segment; the sequence is SVLLYTLSFIYIFIFVIGMIA. The Cytoplasmic segment spans residues 62-81; that stretch reads NSVVVWVNIQAKTTGYDTHC. The helical transmembrane segment at 82–102 threads the bilayer; the sequence is YILNLAIADLWVVLTIPVWVV. At 103 to 118 the chain is on the extracellular side; it reads SLVQHNQWPMGELTCK. Cysteine 117 and cysteine 196 form a disulfide bridge. Residues 119–139 traverse the membrane as a helical segment; it reads VTHLIFSINLFGSIFFLTCMS. Residues 140–162 lie on the Cytoplasmic side of the membrane; sequence VDRYLSITYFTNTPSSRKKMVRR. Residues 163-183 traverse the membrane as a helical segment; it reads VVCILVWLLAFCVSLPDTYYL. Residues 184–213 are Extracellular-facing; the sequence is KTVTSASNNETYCRSFYPEHSIKEWLIGME. Residues 214 to 234 traverse the membrane as a helical segment; it reads LVSVVLGFAVPFSIIAVFYFL. The Cytoplasmic segment spans residues 235-252; sequence LARAISASSDQEKHSSRK. Residues 253-273 traverse the membrane as a helical segment; sequence IIFSYVVVFLVCWLPYHVAVL. Residues 274-296 lie on the Extracellular side of the membrane; the sequence is LDIFSILHYIPFTCRLEHALFTA. The chain crosses the membrane as a helical span at residues 297–319; it reads LHVTQCLSLVHCCVNPVLYSFIN. At 320–362 the chain is on the cytoplasmic side; the sequence is RNYRYELMKAFIFKYSAKTGLTKLIDASRVSETEYSALEQSTK. Residues 324–362 are C-terminal cytoplasmic tail; that stretch reads YELMKAFIFKYSAKTGLTKLIDASRVSETEYSALEQSTK. 3 positions are modified to phosphoserine: serine 347, serine 350, and serine 355.

This sequence belongs to the G-protein coupled receptor 1 family. Atypical chemokine receptor subfamily. As to quaternary structure, homodimer. Can form heterodimers with CXCR4; heterodimerization may regulate CXCR4 signaling activity. Interacts with ARRB1 and ARRB2. In terms of processing, the Ser/Thr residues in the C-terminal cytoplasmic tail may be phosphorylated. Ubiquitinated at the Lys residues in its C-terminal cytoplasmic tail and is essential for correct trafficking from and to the cell membrane. Deubiquitinated by CXCL12-stimulation in a reversible manner. Expressed in monocytes, basophils, B-cells, umbilical vein endothelial cells (HUVEC) and B-lymphoblastoid cells. Lower expression detected in CD4+ T-lymphocytes and natural killer cells. In the brain, detected in endothelial cells and capillaries, and in mature neurons of the frontal cortex and hippocampus. Expressed in tubular formation in the kidney. Highly expressed in astroglial tumor endothelial, microglial and glioma cells. Expressed at low levels in normal CD34+ progenitor cells, but at very high levels in several myeloid malignant cell lines. Expressed in breast carcinomas but not in normal breast tissue (at protein level).

It localises to the cell membrane. Its subcellular location is the early endosome. It is found in the recycling endosome. Functionally, atypical chemokine receptor that controls chemokine levels and localization via high-affinity chemokine binding that is uncoupled from classic ligand-driven signal transduction cascades, resulting instead in chemokine sequestration, degradation, or transcytosis. Also known as interceptor (internalizing receptor) or chemokine-scavenging receptor or chemokine decoy receptor. Acts as a receptor for chemokines CXCL11 and CXCL12/SDF1. Chemokine binding does not activate G-protein-mediated signal transduction but instead induces beta-arrestin recruitment, leading to ligand internalization and activation of MAPK signaling pathway. Required for regulation of CXCR4 protein levels in migrating interneurons, thereby adapting their chemokine responsiveness. In glioma cells, transduces signals via MEK/ERK pathway, mediating resistance to apoptosis. Promotes cell growth and survival. Not involved in cell migration, adhesion or proliferation of normal hematopoietic progenitors but activated by CXCL11 in malignant hemapoietic cells, leading to phosphorylation of ERK1/2 (MAPK3/MAPK1) and enhanced cell adhesion and migration. Plays a regulatory role in CXCR4-mediated activation of cell surface integrins by CXCL12. Required for heart valve development. Regulates axon guidance in the oculomotor system through the regulation of CXCL12 levels. (Microbial infection) Acts as a coreceptor with CXCR4 for a restricted number of HIV isolates. The polypeptide is Atypical chemokine receptor 3 (Homo sapiens (Human)).